The chain runs to 565 residues: Amino-acid acetyltransferase, mitochondrial (565 aa).

The segment at 38–58 (DIATATPAATPSDGAQPPAQN) is disordered. Residues 352–540 (LPVRVLRSME…EFGGGRLVRV (189 aa)) form the N-acetyltransferase domain.

The protein belongs to the acetyltransferase family.

It localises to the mitochondrion. It catalyses the reaction L-glutamate + acetyl-CoA = N-acetyl-L-glutamate + CoA + H(+). Its pathway is amino-acid biosynthesis; L-arginine biosynthesis; N(2)-acetyl-L-ornithine from L-glutamate: step 1/4. Its function is as follows. N-acetylglutamate synthase involved in arginine biosynthesis. The polypeptide is Amino-acid acetyltransferase, mitochondrial (ARG2) (Cryptococcus neoformans var. neoformans serotype D (strain B-3501A) (Filobasidiella neoformans)).